The following is a 629-amino-acid chain: MENSTTTISREELEELQEAFNKIDIDNSGYVSDYELQDLFKEASLPLPGYKVREIVEKILSVADSNKDGKISFEEFVSLMQELKSKDISKTFRKIINKREGITAIGGTSTISSEGTQHSYSEEEKVAFVNWINKALENDPDCKHLIPMNPNDDSLFKSLADGILLCKMINLSEPDTIDERAINKKKLTPFTISENLNLALNSASAIGCTVVNIGASDLKEGKPHLVLGLLWQIIKVGLFADIEISRNEALIALLNEGEELEELMKLSPEELLLRWVNYHLTNAGWHTISNFSQDIKDSRAYFHLLNQIAPKGGEDGPAIAIDLSGINETNDLKRAGLMLQEADKLGCKQFVTPADVVSGNPKLNLAFVANLFNTYPCLHKPNNNDIDMNLLEGESKEERTFRNWMNSLGVNPYINHLYSDLADALVIFQLYEMIRVPVNWSHVNKPPYPALGGNMKKIENCNYAVELGKNKAKFSLVGIAGQDLNEGNSTLTLALVWQLMRRYTLNVLSDLGEGEKVNDEIIIKWVNQTLKSANKKTSISSFKDKSISTSLPVLDLIDAIAPNAVRQEMIRRENLSDEDKLNNAKYAISVARKIGARIYALPDDLVEVKPKMVMTVFACLMGKGLNRIK.

M1 carries the post-translational modification N-acetylmethionine. 2 consecutive EF-hand domains span residues 11–46 and 51–86; these read EELE…ASLP and KVRE…LKSK. Ca(2+)-binding residues include D24, D26, S28, Y30, E35, D64, N66, D68, K70, and E75. Actin-binding regions lie at residues 108–380 and 381–625; these read TSTI…CLHK and PNNN…GKGL. 4 consecutive Calponin-homology (CH) domains span residues 122-238, 266-376, 395-504, and 516-625; these read EEEK…KVGL, LSPE…NTYP, SKEE…RRYT, and KVND…GKGL.

As to quaternary structure, monomer. Phosphorylated. As to expression, in small intestine, colon, and kidney; relatively lower levels of expression are detected in the lung and stomach.

The protein resides in the cytoplasm. It localises to the cell projection. It is found in the stereocilium. Actin-bundling protein. In the inner ear, it is required for stereocilia formation. Mediates liquid packing of actin filaments that is necessary for stereocilia to grow to their proper dimensions. This is Plastin-1 (PLS1) from Homo sapiens (Human).